A 495-amino-acid chain; its full sequence is MNTHSAISELIAPWLELTDPKLAALVITHLELDSRLIKSGDTFVAIQGHAVDGRQFIDKAIAQGANLVLAEADAQHLNGWVEYRAGVPVIYLAELGQHLSELAGRLYGGHHNQLIGVTGTNGKTTITQLIAQWLELLGHKAAVMGTTGNGFLNALEPAANTTGNALQIQATLRDLAERGAQYTALETSSHGLVQGRVKKLHFVAGVFSNLSRDHLDYHGTMEAYAAAKFSLFSEHACQNAIINVDDAVGAQWVKQLPQAIGVSLVTKPNTAQAIWAREVAYAESGITLNFESSWGEGELHAPLIGEFNACNLLLALATLLSLGFEKSALLATAPKLRPVLGRMELFQREQKAKMVVDYAHTPDALEKALRALRVHCAGQLWAIVGCGGDRDRGKRPMMAAIAEQFADRVILTDDNPRSESPQAIVADMVAGLTYPERAHIEHHRFQAASYALQHAGAQDIILLAGKGHEDYQVLANETIHYSDRETAQQLLELQP.

2 residues coordinate UDP-N-acetyl-alpha-D-muramoyl-L-alanyl-D-glutamate: leucine 32 and serine 34. ATP is bound at residue 119 to 125 (GTNGKTT). Residues asparagine 160, 161–162 (TT), serine 188, glutamine 194, and arginine 196 each bind UDP-N-acetyl-alpha-D-muramoyl-L-alanyl-D-glutamate. Lysine 228 carries the N6-carboxylysine modification. Residues arginine 390, 414–417 (DNPR), glycine 465, and glutamate 469 contribute to the meso-2,6-diaminopimelate site. Residues 414–417 (DNPR) carry the Meso-diaminopimelate recognition motif motif.

It belongs to the MurCDEF family. MurE subfamily. It depends on Mg(2+) as a cofactor. In terms of processing, carboxylation is probably crucial for Mg(2+) binding and, consequently, for the gamma-phosphate positioning of ATP.

It is found in the cytoplasm. It catalyses the reaction UDP-N-acetyl-alpha-D-muramoyl-L-alanyl-D-glutamate + meso-2,6-diaminopimelate + ATP = UDP-N-acetyl-alpha-D-muramoyl-L-alanyl-gamma-D-glutamyl-meso-2,6-diaminopimelate + ADP + phosphate + H(+). It participates in cell wall biogenesis; peptidoglycan biosynthesis. Its function is as follows. Catalyzes the addition of meso-diaminopimelic acid to the nucleotide precursor UDP-N-acetylmuramoyl-L-alanyl-D-glutamate (UMAG) in the biosynthesis of bacterial cell-wall peptidoglycan. This chain is UDP-N-acetylmuramoyl-L-alanyl-D-glutamate--2,6-diaminopimelate ligase, found in Vibrio cholerae serotype O1 (strain ATCC 39315 / El Tor Inaba N16961).